Here is a 59-residue protein sequence, read N- to C-terminus: Gonadotropin-releasing hormone receptor (59 aa).

Over 1–2 (VA) the chain is Cytoplasmic. Residues 3-23 (FATSFTVCWTPYYVLGIWYWF) form a helical membrane-spanning segment. Topologically, residues 24-37 (DPEMLNRVSDPVNH) are extracellular. The chain crosses the membrane as a helical span at residues 38–58 (FFFLFAFLNPCFDPLIYGYFS). Residue Leu59 is a topological domain, cytoplasmic.

It belongs to the G-protein coupled receptor 1 family.

It is found in the cell membrane. Receptor for gonadotropin releasing hormone (GnRH) that mediates the action of GnRH to stimulate the secretion of the gonadotropic hormones luteinizing hormone (LH) and follicle-stimulating hormone (FSH). This receptor mediates its action by association with G-proteins that activate a phosphatidylinositol-calcium second messenger system. This Macaca mulatta (Rhesus macaque) protein is Gonadotropin-releasing hormone receptor (GNRHR).